A 308-amino-acid chain; its full sequence is Olfactory receptor 4E2 (308 aa).

Topologically, residues 1–24 are extracellular; it reads MGALNQTRVTEFIFLGLTDNWVLE. N5 carries N-linked (GlcNAc...) asparagine glycosylation. The helical transmembrane segment at 25 to 45 threads the bilayer; that stretch reads ILFFVPFTVTYMLTLLGNFLI. Residues 46–57 lie on the Cytoplasmic side of the membrane; that stretch reads VVTIVFTPRLHN. A helical transmembrane segment spans residues 58 to 78; sequence PMYFFLSNLSFIDICHSSVTV. The Extracellular portion of the chain corresponds to 79–97; the sequence is PKMLEGLLLERKTISFDNC. An intrachain disulfide couples C97 to C179. Residues 98 to 118 traverse the membrane as a helical segment; it reads IAQLFFLHLFACSEIFLLTIM. Positions 105 and 109 each coordinate Cu cation. The Cytoplasmic portion of the chain corresponds to 119–143; it reads AYDRYVAICIPLHYSNVMNMKVCVQ. Residues 144-164 form a helical membrane-spanning segment; the sequence is LVFALWLGGTIHSLVQTFLTI. The Extracellular segment spans residues 165–204; sequence RLPYCGPNIIDSYFCDVPPVIKLACTDTYLTGILIVSNSG. A helical transmembrane segment spans residues 205–225; it reads TISLVCFLALVTSYTVILFSL. Residues 226 to 236 lie on the Cytoplasmic side of the membrane; sequence RKQSAEGRRKA. The helical transmembrane segment at 237–257 threads the bilayer; that stretch reads LSTCSAHFMVVALFFGPCIFL. The Extracellular segment spans residues 258 to 268; it reads YTRPDSSFSID. Residue R260 coordinates Cu cation. The helical transmembrane segment at 269-289 threads the bilayer; it reads KVVSVFYTVVTPLLNPLIYTL. Topologically, residues 290 to 308 are cytoplasmic; sequence RNEEVKTAMKHLRQRRICS.

It belongs to the G-protein coupled receptor 1 family. In terms of tissue distribution, expressed in olfactory epithelium, specifically in the olfactory sensory neurons of the septal organ.

The protein localises to the cell membrane. Its activity is regulated as follows. Copper binding enhances receptor activity in response to odorant binding. Functionally, olfactory receptor that is activated by the binding of organosulfur odorants with thioether groups such as (methylthio)methanethiol (MTMT) and bis(methylthiomethyl) disulfide. Also binds odorants cis-cyclooctene and tert-butyl mercaptan. The activity of this receptor is mediated by G proteins which activate adenylyl cyclase (Potential). This is Olfactory receptor 4E2 from Mus musculus (Mouse).